The following is a 470-amino-acid chain: 3-isopropylmalate dehydratase large subunit (470 aa).

Positions N50 to H121 are disordered. Residues C349, C409, and C412 each contribute to the [4Fe-4S] cluster site.

This sequence belongs to the aconitase/IPM isomerase family. LeuC type 1 subfamily. As to quaternary structure, heterodimer of LeuC and LeuD. [4Fe-4S] cluster is required as a cofactor.

It carries out the reaction (2R,3S)-3-isopropylmalate = (2S)-2-isopropylmalate. It functions in the pathway amino-acid biosynthesis; L-leucine biosynthesis; L-leucine from 3-methyl-2-oxobutanoate: step 2/4. Catalyzes the isomerization between 2-isopropylmalate and 3-isopropylmalate, via the formation of 2-isopropylmaleate. The chain is 3-isopropylmalate dehydratase large subunit from Azotobacter vinelandii.